The sequence spans 193 residues: DNA damage-inducible transcript 4-like protein (193 aa).

It belongs to the DDIT4 family.

The protein localises to the cytoplasm. Inhibits cell growth by regulating the TOR signaling pathway upstream of the TSC1-TSC2 complex and downstream of AKT1. The chain is DNA damage-inducible transcript 4-like protein (Ddit4l) from Mus musculus (Mouse).